A 303-amino-acid polypeptide reads, in one-letter code: N-acetylmuramic acid 6-phosphate etherase (303 aa).

Residues 1–21 form a disordered region; sequence MQPSQLRSLTTESRNPNTMGI. Residues 58-221 form the SIS domain; that stretch reads AYDSISNGGR…STSVMIRQGK (164 aa). Glu86 (proton donor) is an active-site residue. The active site involves Glu117.

This sequence belongs to the GCKR-like family. MurNAc-6-P etherase subfamily. Homodimer.

The catalysed reaction is N-acetyl-D-muramate 6-phosphate + H2O = N-acetyl-D-glucosamine 6-phosphate + (R)-lactate. It participates in amino-sugar metabolism; N-acetylmuramate degradation. Its function is as follows. Specifically catalyzes the cleavage of the D-lactyl ether substituent of MurNAc 6-phosphate, producing GlcNAc 6-phosphate and D-lactate. This Bacillus pumilus (strain SAFR-032) protein is N-acetylmuramic acid 6-phosphate etherase.